We begin with the raw amino-acid sequence, 1104 residues long: Valine--tRNA ligase, mitochondrial (1104 aa).

A mitochondrion-targeting transit peptide spans 1–47 (MNKWLNTLSKTFTFRLLNCHYRRSLPLCQNFSLKKSLTHNQVRFFKM). Serine 73 is modified (phosphoserine). A disordered region spans residues 99 to 119 (KKNAAATTGASQKKPKKKKEV). Residues 190-200 (PNVTGALHIGH) carry the 'HIGH' region motif. 2 positions are modified to phosphoserine: serine 294 and serine 332. The 'KMSKS' region motif lies at 703 to 707 (KMSKS). Lysine 706 contributes to the ATP binding site. Position 707 is a phosphoserine (serine 707). Residue threonine 1003 is modified to Phosphothreonine.

Belongs to the class-I aminoacyl-tRNA synthetase family.

The protein resides in the cytoplasm. It localises to the mitochondrion. The enzyme catalyses tRNA(Val) + L-valine + ATP = L-valyl-tRNA(Val) + AMP + diphosphate. The chain is Valine--tRNA ligase, mitochondrial (VAS1) from Saccharomyces cerevisiae (strain ATCC 204508 / S288c) (Baker's yeast).